Here is a 484-residue protein sequence, read N- to C-terminus: MSDRIRVRYAPSPTGYLHIGNARTALFNYLYAKHYNGDFVIRIEDTDKKRNLEDGETSQFDNLKWLGLDWDESVDKDNGYGPYRQSERQHIYQPLIDQLLAEDKAYKCYMTEEELEAEREAQIARGEMPRYGGQHAHLTEEQRQQFEAEGRQPSIRFRVPQNQTYSFDDMVKGNISFDSNGIGDWVIVKKDGIPTYNFAVAIDDHYMQISDVIRGDDHISNTPKQIMIYEAFGWEPPRFGHMSLIVNEERKKLSKRDGQILQFIEQYRDLGYLPEALFNFIALLGWSPEGEEEIFSKEEFIKIFDEKRLSKSPAFFDKQKLAWVNNQYMKQKDTETVFQLALPHLIKANLIPEVPSEEDLSWGRKLIALYQKEMSYAGEIVPLSEMFFKEMPALGEEEQQVINGKQVPELMTHLFSKLEALEPFESAEIKKTIKEVQKETGIKGKQLFMPIRVAVTGQMHGPELPNTIEVLGKEKVLNRLKQYK.

Positions 11-21 match the 'HIGH' region motif; that stretch reads PSPTGYLHIGN. Positions 252–256 match the 'KMSKS' region motif; the sequence is KLSKR. Lys255 serves as a coordination point for ATP.

It belongs to the class-I aminoacyl-tRNA synthetase family. Glutamate--tRNA ligase type 1 subfamily. Monomer.

The protein localises to the cytoplasm. It carries out the reaction tRNA(Glu) + L-glutamate + ATP = L-glutamyl-tRNA(Glu) + AMP + diphosphate. Catalyzes the attachment of glutamate to tRNA(Glu) in a two-step reaction: glutamate is first activated by ATP to form Glu-AMP and then transferred to the acceptor end of tRNA(Glu). The sequence is that of Glutamate--tRNA ligase from Staphylococcus aureus (strain COL).